The chain runs to 113 residues: Prefoldin subunit beta (113 aa).

Belongs to the prefoldin subunit beta family. As to quaternary structure, heterohexamer of two alpha and four beta subunits.

Its subcellular location is the cytoplasm. In terms of biological role, molecular chaperone capable of stabilizing a range of proteins. Seems to fulfill an ATP-independent, HSP70-like function in archaeal de novo protein folding. This is Prefoldin subunit beta from Methanococcus maripaludis (strain C6 / ATCC BAA-1332).